The primary structure comprises 478 residues: Solute carrier family 49 member 4 (478 aa).

The disordered stretch occupies residues 1-27; the sequence is MGSGWSSEEEERQPLLGPGLGPAPGAA. Topologically, residues 1-51 are cytoplasmic; sequence MGSGWSSEEEERQPLLGPGLGPAPGAARRGREATAVLPAAGPNPGRVYGRR. The Di-leucine motif; mediates lysosomal localization signature appears at 15-16; sequence LL. A helical transmembrane segment spans residues 52–72; the sequence is WLVLLLFSLLAFAQGLVWNTW. Residues 73–89 are Lumenal-facing; the sequence is GPIQNSARQAYGFSGWD. Residues 90–110 traverse the membrane as a helical segment; the sequence is IALLVLWGPIGFLPCFAFMWL. Over 111–117 the chain is Cytoplasmic; that stretch reads LDKRGLR. The helical transmembrane segment at 118 to 138 threads the bilayer; the sequence is VTVLLTSFLMVLGTGLRCIPV. Residues 139–152 are Lumenal-facing; sequence SDLALKKRLIHGGQ. The chain crosses the membrane as a helical span at residues 153 to 173; sequence ILNGLAGPTVMNAAPFLSTTW. The Cytoplasmic segment spans residues 174–184; sequence FSADERATATA. Residues 185-205 traverse the membrane as a helical segment; sequence IASMLSYLGGACAFLVGPLVV. Residues 206–229 lie on the Lumenal side of the membrane; it reads PAPNGTAPLLAAESSRAHIKDRIE. N-linked (GlcNAc...) asparagine glycosylation occurs at Asn209. A helical transmembrane segment spans residues 230-250; it reads TVLYAEFGVVCLIFSATLAYF. Over 251–281 the chain is Cytoplasmic; the sequence is PPRPPLPPSVAAASQRLSYRRSFCRLLSNLR. The chain crosses the membrane as a helical span at residues 282 to 302; sequence FLMIALAYAIPLGVFAGWSGV. Residues 303 to 314 are Lumenal-facing; sequence LDLILTPVHVSQ. Residues 315-335 traverse the membrane as a helical segment; it reads VDAGWIGFWSIVGGCVVGIAM. The Cytoplasmic segment spans residues 336 to 347; sequence ARFADFIRGMLK. The helical transmembrane segment at 348–368 threads the bilayer; it reads LILLLLFSGATLSSTWFTLTC. Residues 369-384 are Lumenal-facing; sequence LNSITHLPLTTVTLYA. Residues 385–405 form a helical membrane-spanning segment; that stretch reads SCILLGVFLNSSVPIFFELFV. Over 406 to 414 the chain is Cytoplasmic; sequence ETVYPVPEG. Residues 415-435 traverse the membrane as a helical segment; it reads ITCGVVTFLSNMFMGVLLFFV. Topologically, residues 436 to 442 are lumenal; that stretch reads TFYHTEL. A helical membrane pass occupies residues 443–463; the sequence is SWFNWCLPGSCLLSLLLILCF. The Cytoplasmic segment spans residues 464 to 478; it reads RESYDRLYLDVVVSV.

Belongs to the major facilitator superfamily. Cleaved in lysosomes by cathepsin L between Leu-214 and Ala-261, generating a N-glycosylated N-terminal and a non-glycosylated C-terminal fragment.

Its subcellular location is the lysosome membrane. It catalyses the reaction pyridoxine(out) + n H(+)(out) = pyridoxine(in) + n H(+)(in). Its function is as follows. Mediates H(+)-dependent pyridoxine transport. This is Solute carrier family 49 member 4 (Slc49a4) from Mus musculus (Mouse).